Reading from the N-terminus, the 485-residue chain is Glutamate--tRNA ligase (485 aa).

The short motif at 10–20 is the 'HIGH' region element; the sequence is PSPTGHLHIGN. Positions 253–257 match the 'KMSKS' region motif; that stretch reads KLSKR. Lysine 256 is an ATP binding site.

Belongs to the class-I aminoacyl-tRNA synthetase family. Glutamate--tRNA ligase type 1 subfamily. As to quaternary structure, monomer.

It is found in the cytoplasm. It carries out the reaction tRNA(Glu) + L-glutamate + ATP = L-glutamyl-tRNA(Glu) + AMP + diphosphate. Functionally, catalyzes the attachment of glutamate to tRNA(Glu) in a two-step reaction: glutamate is first activated by ATP to form Glu-AMP and then transferred to the acceptor end of tRNA(Glu). The polypeptide is Glutamate--tRNA ligase (Enterococcus faecalis (strain ATCC 700802 / V583)).